A 186-amino-acid chain; its full sequence is Hydra actinoporin-like toxin 6 (186 aa).

Positions 1-21 are cleaved as a signal peptide; that stretch reads MLVYVCLVVILIQLPFGAAGG. Positions 158 to 160 match the Cell attachment site motif; sequence RAG.

The protein belongs to the actinoporin family. HALT subfamily. As to quaternary structure, octamer or nonamer in membranes. Monomer in the soluble state. In vitro, interacts with folate receptor alpha (of target organism). As to expression, expressed female germline during oogenesis.

The protein resides in the nematocyst. The protein localises to the secreted. It is found in the target cell membrane. Its function is as follows. Pore-forming protein that forms hydrophilic pores and causes cytolysis. Compared to equinatoxin-2 (AC P61914), it reveals lower cytolysis activity (5-12-fold difference, tested on erythrocytes), a larger pore size (probably 2-3 nm) and different affinity to membrane lipids (100-fold lower affinity to sphingomyelin). Binds to sulfatides. Shows cytolytic activity on HeLa cells, with a different potency than its paralogs (from most potent to less potent: HALT-4&gt;HALT-6~HALT-1&gt;HALT-3&gt;HALT-7&gt;HALT-2). Pore formation is a multi-step process that involves specific recognition of membrane lipid by a protein aromatic residues rich region, firm binding to the membrane (mainly driven by hydrophobic interactions) accompanied by the transfer of the N-terminal region to the lipid-water interface and finally pore formation after oligomerization of monomers. In vitro, binds to the folate receptor alpha (FOLR1), a GPI-anchored membrane protein that plays a major role in the uptake of folate/folic acid into cells via endocytosis, suggesting a possible involvement of this receptor in the mechanism of HALT-1-induced cell lysis. In vivo, does not cause visible paralysis in larvae of the blowfly Sarcophaga faculata, the most common arthropod prey of Hydra. This chain is Hydra actinoporin-like toxin 6, found in Hydra vulgaris (Hydra).